The following is a 266-amino-acid chain: Autophagy protein 5 (266 aa).

Lys97 is covalently cross-linked (Glycyl lysine isopeptide (Lys-Gly) (interchain with G-Cter in atg12)). The segment covering 158-179 (SSSTPSSTPHPGSSGSSKAPST) has biased composition (low complexity). Positions 158 to 182 (SSSTPSSTPHPGSSGSSKAPSTASP) are disordered.

It belongs to the ATG5 family. As to quaternary structure, conjugated with atg12. Post-translationally, conjugated to atg12; which is essential for autophagy.

The protein localises to the preautophagosomal structure membrane. Its function is as follows. Involved in cytoplasm to vacuole transport (Cvt) and autophagic vesicle formation. Autophagy is essential for maintenance of amino acid levels and protein synthesis under nitrogen starvation. Required for selective autophagic degradation of the nucleus (nucleophagy). Also required for mitophagy, which eliminates defective or superfluous mitochondria in order to fulfill cellular energy requirements and prevent excess ROS production. Conjugation with atg12, through a ubiquitin-like conjugating system involving atg7 as an E1-like activating enzyme and atg10 as an E2-like conjugating enzyme, is essential for its function. The atg12-atg5 conjugate acts as an E3-like enzyme which is required for lipidation of atg8 and atg8 association to the vesicle membranes. The protein is Autophagy protein 5 (atg5) of Sclerotinia sclerotiorum (strain ATCC 18683 / 1980 / Ss-1) (White mold).